Consider the following 378-residue polypeptide: Quinolinate synthase (378 aa).

Iminosuccinate contacts are provided by histidine 59 and serine 80. Cysteine 125 lines the [4Fe-4S] cluster pocket. Iminosuccinate is bound by residues 151 to 153 (YAN) and serine 168. Cysteine 212 is a binding site for [4Fe-4S] cluster. Residues 238 to 240 (HPE) and threonine 255 contribute to the iminosuccinate site. A [4Fe-4S] cluster-binding site is contributed by cysteine 309.

This sequence belongs to the quinolinate synthase family. Type 1 subfamily. [4Fe-4S] cluster is required as a cofactor.

It localises to the cytoplasm. The enzyme catalyses iminosuccinate + dihydroxyacetone phosphate = quinolinate + phosphate + 2 H2O + H(+). The protein operates within cofactor biosynthesis; NAD(+) biosynthesis; quinolinate from iminoaspartate: step 1/1. Functionally, catalyzes the condensation of iminoaspartate with dihydroxyacetone phosphate to form quinolinate. The chain is Quinolinate synthase from Burkholderia pseudomallei (strain 1106a).